The primary structure comprises 382 residues: F-box protein At3g19470 (382 aa).

The F-box domain occupies 1-44; it reads MYNLPRDLPEEVLCRIPLTSLRPVRSTCKKWSTLSKCGSFAKKH.

This chain is F-box protein At3g19470, found in Arabidopsis thaliana (Mouse-ear cress).